We begin with the raw amino-acid sequence, 504 residues long: Maturase K (504 aa).

It belongs to the intron maturase 2 family. MatK subfamily.

It is found in the plastid. The protein localises to the chloroplast. Its function is as follows. Usually encoded in the trnK tRNA gene intron. Probably assists in splicing its own and other chloroplast group II introns. The sequence is that of Maturase K from Arabidopsis thaliana (Mouse-ear cress).